A 29-amino-acid chain; its full sequence is LFGGLLDKLKEKIKKYCNKENLDKACSKL.

This sequence belongs to the myrmexin family. In terms of assembly, heterodimer composed of subunit SS1 and subunit LS1 (U1-PSDTX-Pt1b), and heterodimer composed of subunit SS1 and LS2 (U1-PSDTX-Pt1a); disulfide-linked. Expressed by the venom gland.

Its subcellular location is the secreted. Its function is as follows. This heterodimer may have anti-inflammatory properties, since the myrmexin complex (composed of 6 SS-LS heterodimers) inhibits carrageenin-induced edema in a dose-dependent manner (after subcutaneous injection into rats). The protein is U1-pseudomyrmecitoxin-Pt1 subunit SS1 of Pseudomyrmex triplarinus (Ant).